Consider the following 1559-residue polypeptide: MSSLEVVDGCPYGYRPYPDSGTNALNPCFISVISAWQAVFFLLIGSYQLWKLYKNNKVPPRFKNFPTLPSKINSRHLTHLTNVCFQSTLIICELALVSQSSDRVYPFILKKALYLNLLFNLGISLPTQYLAYFKSTFSMGNQLFYYMFQILLQLFLILQRYYHGSSNERLTVISGQTAMILEVLLLFNSVAIFIYDLCIFEPINELSEYYKKNGWYPPVHVLSYITFIWMNKLIVETYRNKKIKDPNQLPLPPVDLNIKSISKEFKANWELEKWLNRNSLWRAIWKSFGRTISVAMLYETTSDLLSVVQPQFLRIFIDGLNPETSSKYPPLNGVFIALTLFVISVVSVFLTNQFYIGIFEAGLGIRGSLASLVYQKSLRLTLAERNEKSTGDILNLMSVDVLRIQRFFENAQTIIGAPIQIIVVLTSLYWLLGKAVIGGLVTMAIMMPINAFLSRKVKKLSKTQMKYKDMRIKTITELLNAIKSIKLYAWEEPMMARLNHVRNDMELKNFRKIGIVSNLIYFAWNCVPLMVTCSTFGLFSLFSDSPLSPAIVFPSLSLFNILNSAIYSVPSMINTIIETSVSMERLKSFLLSDEIDDSFIERIDPSADERALPAIEMNNITFLWKSKEVLTSSQSGDNLRTDEESIIGSSQIALKNIDHFEAKRGDLVCVVGRVGAGKSTFLKAILGQLPCMSGSRDSIPPKLIIRSSSVAYCSQESWIMNASVRENILFGHKFDQDYYDLTIKACQLLPDLKILPDGDETLVGEKGISLSGGQKARLSLARAVYSRADIYLLDDILSAVDAEVSKNIIEYVLIGKTALLKNKTIILTTNTVSILKHSQMIYALENGEIVEQGNYEDVMNRKNNTSKLKKLLEEFDSPIDNGNESDVQTEHRSESEVDEPLQLKVTESETEDEVVTESELELIKANSRRASLATLRPRPFVGAQLDSVKKTAQKAEKTEVGRVKTKIYLAYIKACGVLGVVLFFLFMILTRVFDLAENFWLKYWSESNEKNGSNERVWMFVGVYSLIGVASAAFNNLRSIMMLLYCSIRGSKKLHESMAKSVIRSPMTFFETTPVGRIINRFSSDMDAVDSNLQYIFSFFFKSILTYLVTVILVGYNMPWFLVFNMFLVVIYIYYQTFYIVLSRELKRLISISYSPIMSLMSESLNGYSIIDAYDHFERFIYLNYEKIQYNVDFVFNFRSTNRWLSVRLQTIGATIVLATAILALATMNTKRQLSSGMVGLLMSYSLEVTGSLTWIVRTTVTIETNIVSVERIVEYCELPPEAQSINPEKRPDENWPSKGGIEFKNYSTKYRENLDPVLNNINVKIEPCEKVGIVGRTGAGKSTLSLALFRILEPTEGKIIIDGIDISDIGLFDLRSHLAIIPQDAQAFEGTVKTNLDPFNRYSEDELKRAVEQAHLKPHLEKMLHSKPRGDDSNEEDGNVNDILDVKINENGSNLSVGQRQLLCLARALLNRSKILVLDEATASVDMETDKIIQDTIRREFKDRTILTIAHRIDTVLDSDKIIVLDQGSVREFDSPSKLLSDKTSIFYSLCEKGGYLK.

At 1–29 (MSSLEVVDGCPYGYRPYPDSGTNALNPCF) the chain is on the vacuolar side. A helical transmembrane segment spans residues 30–50 (ISVISAWQAVFFLLIGSYQLW). Topologically, residues 51-84 (KLYKNNKVPPRFKNFPTLPSKINSRHLTHLTNVC) are cytoplasmic. The helical transmembrane segment at 85 to 105 (FQSTLIICELALVSQSSDRVY) threads the bilayer. Topologically, residues 106 to 110 (PFILK) are vacuolar. Residues 111–127 (KALYLNLLFNLGISLPT) traverse the membrane as a helical segment. Over 128–139 (QYLAYFKSTFSM) the chain is Cytoplasmic. Residues 140–160 (GNQLFYYMFQILLQLFLILQR) form a helical membrane-spanning segment. Over 161–178 (YYHGSSNERLTVISGQTA) the chain is Vacuolar. A helical membrane pass occupies residues 179 to 199 (MILEVLLLFNSVAIFIYDLCI). At 200-283 (FEPINELSEY…WLNRNSLWRA (84 aa)) the chain is on the cytoplasmic side. The chain crosses the membrane as a helical span at residues 284–304 (IWKSFGRTISVAMLYETTSDL). The ABC transmembrane type-1 1 domain occupies 292 to 578 (ISVAMLYETT…VPSMINTIIE (287 aa)). Residues 305–333 (LSVVQPQFLRIFIDGLNPETSSKYPPLNG) lie on the Vacuolar side of the membrane. Residues 334–354 (VFIALTLFVISVVSVFLTNQF) form a helical membrane-spanning segment. The Cytoplasmic segment spans residues 355–410 (YIGIFEAGLGIRGSLASLVYQKSLRLTLAERNEKSTGDILNLMSVDVLRIQRFFEN). A helical membrane pass occupies residues 411 to 431 (AQTIIGAPIQIIVVLTSLYWL). Residues 432–434 (LGK) lie on the Vacuolar side of the membrane. Residues 435-455 (AVIGGLVTMAIMMPINAFLSR) form a helical membrane-spanning segment. The Cytoplasmic portion of the chain corresponds to 456-518 (KVKKLSKTQM…NFRKIGIVSN (63 aa)). A helical membrane pass occupies residues 519-539 (LIYFAWNCVPLMVTCSTFGLF). Residues 540–560 (SLFSDSPLSPAIVFPSLSLFN) lie on the Vacuolar side of the membrane. A helical membrane pass occupies residues 561–581 (ILNSAIYSVPSMINTIIETSV). The Cytoplasmic segment spans residues 582–972 (SMERLKSFLL…VKTKIYLAYI (391 aa)). The ABC transporter 1 domain occupies 639–871 (LRTDEESIIG…KNNTSKLKKL (233 aa)). A Phosphoserine modification is found at Ser-645. Residue 672–679 (GRVGAGKS) coordinates ATP. The segment at 877-899 (SPIDNGNESDVQTEHRSESEVDE) is disordered. Ser-885 bears the Phosphoserine mark. Thr-889 bears the Phosphothreonine mark. 2 positions are modified to phosphoserine: Ser-893 and Ser-895. Residue Thr-916 is modified to Phosphothreonine. Ser-927 and Ser-931 each carry phosphoserine. Thr-934 carries the post-translational modification Phosphothreonine. The helical transmembrane segment at 973 to 993 (KACGVLGVVLFFLFMILTRVF) threads the bilayer. Residues 980–1265 (VVLFFLFMIL…IVRTTVTIET (286 aa)) form the ABC transmembrane type-1 2 domain. Residues 994–1030 (DLAENFWLKYWSESNEKNGSNERVWMFVGVYSLIGVA) are Vacuolar-facing. An N-linked (GlcNAc...) asparagine glycan is attached at Asn-1011. A helical transmembrane segment spans residues 1031-1052 (SAAFNNLRSIMMLLYCSIRGSK). Residues 1053-1095 (KLHESMAKSVIRSPMTFFETTPVGRIINRFSSDMDAVDSNLQY) lie on the Cytoplasmic side of the membrane. A helical transmembrane segment spans residues 1096–1116 (IFSFFFKSILTYLVTVILVGY). Asn-1117 is a topological domain (vacuolar). The chain crosses the membrane as a helical span at residues 1118 to 1138 (MPWFLVFNMFLVVIYIYYQTF). The Cytoplasmic segment spans residues 1139–1209 (YIVLSRELKR…STNRWLSVRL (71 aa)). Residues 1210 to 1230 (QTIGATIVLATAILALATMNT) form a helical membrane-spanning segment. Over 1231–1235 (KRQLS) the chain is Vacuolar. The helical transmembrane segment at 1236–1256 (SGMVGLLMSYSLEVTGSLTWI) threads the bilayer. Residues 1257–1559 (VRTTVTIETN…SLCEKGGYLK (303 aa)) lie on the Cytoplasmic side of the membrane. Residues 1302–1553 (IEFKNYSTKY…KTSIFYSLCE (252 aa)) form the ABC transporter 2 domain. Position 1336–1343 (1336–1343 (GRTGAGKS)) interacts with ATP. The span at 1420–1433 (HLEKMLHSKPRGDD) shows a compositional bias: basic and acidic residues. Residues 1420 to 1439 (HLEKMLHSKPRGDDSNEEDG) form a disordered region.

This sequence belongs to the ABC transporter superfamily.

Its subcellular location is the vacuole membrane. Functionally, cooperates for the ATP-dependent vacuolar transport of bilirubin and glutathione conjugates. The polypeptide is Bile pigment transporter 1 (BPT1) (Saccharomyces cerevisiae (strain ATCC 204508 / S288c) (Baker's yeast)).